A 359-amino-acid polypeptide reads, in one-letter code: Fructose-bisphosphate aldolase class 2 (359 aa).

D-glyceraldehyde 3-phosphate is bound at residue S61. The active-site Proton donor is the D110. Zn(2+) is bound by residues H111, D145, E175, and H227. G228 contributes to the dihydroxyacetone phosphate binding site. Residue H265 participates in Zn(2+) binding. Dihydroxyacetone phosphate contacts are provided by residues 266 to 268 and 287 to 290; these read GGS and NIDT.

This sequence belongs to the class II fructose-bisphosphate aldolase family. Zn(2+) is required as a cofactor.

It catalyses the reaction beta-D-fructose 1,6-bisphosphate = D-glyceraldehyde 3-phosphate + dihydroxyacetone phosphate. The protein operates within carbohydrate degradation; glycolysis; D-glyceraldehyde 3-phosphate and glycerone phosphate from D-glucose: step 4/4. Functionally, catalyzes the aldol condensation of dihydroxyacetone phosphate (DHAP or glycerone-phosphate) with glyceraldehyde 3-phosphate (G3P) to form fructose 1,6-bisphosphate (FBP) in gluconeogenesis and the reverse reaction in glycolysis. This Buchnera aphidicola subsp. Schizaphis graminum (strain Sg) protein is Fructose-bisphosphate aldolase class 2 (fbaA).